The primary structure comprises 140 residues: Relaxin-3 (140 aa).

An N-terminal signal peptide occupies residues 1–26 (MAKRPLLLLLLAVWVLAGELWLRTEA). Disulfide bonds link Cys36–Cys127, Cys48–Cys140, and Cys126–Cys131. A propeptide spans 56–116 (SDMLAHEALG…RTPGALRGSR (61 aa)) (connecting peptide).

This sequence belongs to the insulin family. In terms of assembly, heterodimer of a B chain and an A chain linked by two disulfide bonds.

The protein localises to the secreted. Functionally, may play a role in neuropeptide signaling processes. Ligand for LGR7, RXFP3 and RXFP4. This Sus scrofa (Pig) protein is Relaxin-3 (RLN3).